Here is a 179-residue protein sequence, read N- to C-terminus: Large ribosomal subunit protein uL5 (179 aa).

Belongs to the universal ribosomal protein uL5 family. As to quaternary structure, part of the 50S ribosomal subunit; part of the 5S rRNA/L5/L18/L25 subcomplex. Contacts the 5S rRNA and the P site tRNA. Forms a bridge to the 30S subunit in the 70S ribosome.

Functionally, this is one of the proteins that bind and probably mediate the attachment of the 5S RNA into the large ribosomal subunit, where it forms part of the central protuberance. In the 70S ribosome it contacts protein S13 of the 30S subunit (bridge B1b), connecting the 2 subunits; this bridge is implicated in subunit movement. Contacts the P site tRNA; the 5S rRNA and some of its associated proteins might help stabilize positioning of ribosome-bound tRNAs. The sequence is that of Large ribosomal subunit protein uL5 from Clostridium botulinum (strain Alaska E43 / Type E3).